Here is a 317-residue protein sequence, read N- to C-terminus: Homoserine O-acetyltransferase (317 aa).

Cys142 (acyl-thioester intermediate) is an active-site residue. Substrate is bound by residues Lys163 and Ser192. Residue His235 is the Proton acceptor of the active site. Residue Glu237 is part of the active site. Arg249 lines the substrate pocket.

Belongs to the MetA family.

It is found in the cytoplasm. The enzyme catalyses L-homoserine + acetyl-CoA = O-acetyl-L-homoserine + CoA. It participates in amino-acid biosynthesis; L-methionine biosynthesis via de novo pathway; O-acetyl-L-homoserine from L-homoserine: step 1/1. Its function is as follows. Transfers an acetyl group from acetyl-CoA to L-homoserine, forming acetyl-L-homoserine. In Rhizorhabdus wittichii (strain DSM 6014 / CCUG 31198 / JCM 15750 / NBRC 105917 / EY 4224 / RW1) (Sphingomonas wittichii), this protein is Homoserine O-acetyltransferase.